Consider the following 162-residue polypeptide: Selenoprotein F (162 aa).

Positions 1–28 (MAAEPGGWLGPALGLRLLLATALQMVSA) are cleaved as a signal peptide. Position 93 (Sec93) is a non-standard amino acid, selenocysteine.

This sequence belongs to the selenoprotein M/F family. Forms a tight complex with UGGT1/UGCGL1. Interacts with UGGT2/UGCGL2. Interacts with RDH11.

The protein resides in the endoplasmic reticulum lumen. Its function is as follows. May be involved in redox reactions associated with the formation of disulfide bonds. May contribute to the quality control of protein folding in the endoplasmic reticulum. May regulate protein folding by enhancing the catalytic activity of UGGT1/UGCGL1 and UGGT2/UGCGL2. The sequence is that of Selenoprotein F from Sus scrofa (Pig).